A 125-amino-acid chain; its full sequence is Large ribosomal subunit protein bL17 (125 aa).

The protein belongs to the bacterial ribosomal protein bL17 family. As to quaternary structure, part of the 50S ribosomal subunit. Contacts protein L32.

In Blochmanniella pennsylvanica (strain BPEN), this protein is Large ribosomal subunit protein bL17.